The sequence spans 252 residues: Fructose-1,6-bisphosphatase/inositol-1-monophosphatase (252 aa).

Residues Glu-65, Asp-81, Ile-83, and Asp-84 each contribute to the Mg(2+) site. Residues 84–86, Arg-170, Phe-175, and Arg-194 each bind substrate; that span reads DGS. Asp-201 provides a ligand contact to Mg(2+).

Belongs to the inositol monophosphatase superfamily. FBPase class 4 family. In terms of assembly, homodimer. The cofactor is Mg(2+).

The enzyme catalyses beta-D-fructose 1,6-bisphosphate + H2O = beta-D-fructose 6-phosphate + phosphate. The catalysed reaction is a myo-inositol phosphate + H2O = myo-inositol + phosphate. IMPase activity is inhibited by Ca(2+) and Zn(2+). In contrast to mammalian I-1-P phosphatases, is not inhibited by Li(+) up to 100 mM. Its function is as follows. Phosphatase with broad specificity; it can dephosphorylate fructose 1,6-bisphosphate, both D and L isomers of inositol-1-phosphate (I-1-P), 2'-AMP, pNPP, beta-glycerol phosphate, and alpha-D-glucose-1-phosphate. Cannot hydrolyze glucose-6-phosphate, fructose-6-phosphate, NAD(+) or 5'-AMP. May be involved in the biosynthesis of a unique osmolyte, di-myo-inositol 1,1-phosphate. This is Fructose-1,6-bisphosphatase/inositol-1-monophosphatase (suhB) from Methanocaldococcus jannaschii (strain ATCC 43067 / DSM 2661 / JAL-1 / JCM 10045 / NBRC 100440) (Methanococcus jannaschii).